Reading from the N-terminus, the 471-residue chain is Phosphatidylserine synthase 2 (471 aa).

A disordered region spans residues 1–26 (MRRGERRVAGGSGSESPLLEGRRSTE). At 1 to 40 (MRRGERRVAGGSGSESPLLEGRRSTESEVYDDGTNTFFWR) the chain is on the cytoplasmic side. Residues serine 12, serine 14, and serine 16 each carry the phosphoserine modification. A helical membrane pass occupies residues 41-61 (AHTLTVLFILTCALGYVTLLE). The Lumenal segment spans residues 62-74 (ETPQDTAYNTKRG). Residues 75–95 (IVASILVFLCFGVTQAKDGPF) form a helical membrane-spanning segment. Over 96 to 104 (SRPHPAYWR) the chain is Cytoplasmic. The helical transmembrane segment at 105–125 (FWLCVSVVYELFLIFILFQTV) threads the bilayer. The Lumenal segment spans residues 126-291 (HDGRQFLKYV…EWKPASSLHR (166 aa)). A glycan (N-linked (GlcNAc...) asparagine) is linked at asparagine 159. The helical transmembrane segment at 292-312 (WLAVCGIILVFLLAELNTFYL) threads the bilayer. Residue lysine 313 is a topological domain, cytoplasmic. The chain crosses the membrane as a helical span at residues 314–334 (FVLWMPPEHYLVLLRLVFFVN). The Lumenal segment spans residues 335 to 354 (VGGVAMREIYDFMDELKPHR). Residues 355-375 (KLGQQAWLVAAITVTELLIVV) form a helical membrane-spanning segment. Over 376-381 (KYDPHT) the chain is Cytoplasmic. Residues 382-402 (LTLSLPFYISQCWTLGSILVL) form a helical membrane-spanning segment. The Lumenal portion of the chain corresponds to 403-471 (TWTVWRFFLR…PAEEGPSAAS (69 aa)). The tract at residues 423 to 471 (RQKQQSHQAINNGDGHPGPEDDLPGTGTAEEEGTTNDGVPAEEGPSAAS) is disordered.

The protein belongs to the phosphatidyl serine synthase family.

The protein resides in the endoplasmic reticulum membrane. It catalyses the reaction a 1,2-diacyl-sn-glycero-3-phosphoethanolamine + L-serine = a 1,2-diacyl-sn-glycero-3-phospho-L-serine + ethanolamine. The catalysed reaction is 1-hexadecanoyl-2-(9Z-octadecenoyl)-sn-glycero-3-phosphoethanolamine + L-serine = 1-hexadecanoyl-2-(9Z-octadecenoyl)-sn-glycero-3-phospho-L-serine + ethanolamine. It carries out the reaction 1-hexadecanoyl-2-(4Z,7Z,10Z,13Z,16Z,19Z-docosahexaenoyl)-sn-glycero-3-phosphoethanolamine + L-serine = 1-hexadecanoyl-2-(4Z,7Z,10Z,13Z,16Z,19Z-docosahexaenoyl)-sn-glycero-3-phosphoserine + ethanolamine. The enzyme catalyses 1-octadecanoyl-2-(5Z,8Z,11Z,14Z)-eicosatetraenoyl-sn-glycero-3-phosphoethanolamine + L-serine = 1-octadecanoyl-2-(5Z,8Z,11Z,14Z)-eicosatetraenoyl-sn-glycero-3-phosphoserine + ethanolamine. It catalyses the reaction 1-octadecanoyl-2-(4Z,7Z,10Z,13Z,16Z,19Z-docosahexaenoyl)-sn-glycero-3-phosphoethanolamine + L-serine = 1-octadecanoyl-2-(4Z,7Z,10Z,13Z,16Z,19Z-docosahexaenoyl)-sn-glycero-3-phosphoserine + ethanolamine. The catalysed reaction is 1-(1Z-octadecenyl)-2-(4Z,7Z,10Z,13Z,16Z,19Z-docosahexaenoyl)-sn-glycero-3-phosphoethanolamine + L-serine = 1-(1Z-octadecenyl)-2-(4Z,7Z,10Z,13Z,16Z,19Z-docosahexaenoyl)-sn-glycero-3-phospho-L-serine + ethanolamine. It carries out the reaction 1-octadecanoyl-2-(9Z-octadecenoyl)-sn-glycero-3-phosphoethanolamine + L-serine = 1-octadecanoyl-2-(9Z-octadecenoyl)-sn-glycero-3-phospho-L-serine + ethanolamine. The enzyme catalyses 1-(1Z-octadecenyl)-2-(9Z-octadecenoyl)-sn-glycero-3-phosphoethanolamine + L-serine = 1-(1Z-octadecenyl)-2-(9Z-octadecenoyl)-sn-glycero-3-phospho-L-serine + ethanolamine. It catalyses the reaction 1-(1Z-octadecenyl)-2-(5Z,8Z,11Z,14Z- eicosatetraenoyl)-sn-glycero-3-phosphoethanolamine + L-serine = 1-(1Z-octadecenyl)-2-(5Z,8Z,11Z,14Z-eicosatetraenoyl)-sn-glycero-3-phospho-L-serine + ethanolamine. It participates in phospholipid metabolism; phosphatidylserine biosynthesis. Catalyzes a base-exchange reaction in which the polar head group of phosphatidylethanolamine (PE) or phosphatidylcholine (PC) is replaced by L-serine. Catalyzes the conversion of phosphatatidylethanolamine and does not act on phosphatidylcholine. Can utilize both phosphatidylethanolamine (PE) plasmalogen and diacyl PE as substrate and the latter is six times better utilized, indicating the importance of an ester linkage at the sn-1 position. Although it shows no sn-1 fatty acyl preference, exhibits significant preference towards docosahexaenoic acid (22:6n-3) compared with 18:1 or 20:4 at the sn-2 position. The protein is Phosphatidylserine synthase 2 (Ptdss2) of Rattus norvegicus (Rat).